A 322-amino-acid chain; its full sequence is Replication factor C small subunit (322 aa).

45–52 (GPPGVGKT) is a binding site for ATP.

It belongs to the activator 1 small subunits family. RfcS subfamily. In terms of assembly, heteromultimer composed of small subunits (RfcS) and large subunits (RfcL).

Its function is as follows. Part of the RFC clamp loader complex which loads the PCNA sliding clamp onto DNA. This chain is Replication factor C small subunit, found in Methanocella arvoryzae (strain DSM 22066 / NBRC 105507 / MRE50).